A 618-amino-acid polypeptide reads, in one-letter code: Probable arginine--tRNA ligase, cytoplasmic (618 aa).

Interaction with tRNA regions lie at residues 60–61 and 104–109; these read ET and NGIFLR. L-arginine is bound by residues 146 to 151, H160, Y359, D363, and Q387; that span reads EFSSPN. Positions 149-160 match the 'HIGH' region motif; sequence SPNIAKPFHAGH. The interaction with tRNA stretch occupies residues 496-510; sequence DTGPYLQYAHSRLSS.

It belongs to the class-I aminoacyl-tRNA synthetase family.

Its subcellular location is the cytoplasm. It catalyses the reaction tRNA(Arg) + L-arginine + ATP = L-arginyl-tRNA(Arg) + AMP + diphosphate. Functionally, forms part of a macromolecular complex that catalyzes the attachment of specific amino acids to cognate tRNAs during protein synthesis. The chain is Probable arginine--tRNA ligase, cytoplasmic (mrs1) from Schizosaccharomyces pombe (strain 972 / ATCC 24843) (Fission yeast).